The sequence spans 383 residues: D-alanine--D-alanine ligase (383 aa).

Residues lysine 169–arginine 373 enclose the ATP-grasp domain. Glutamine 196 to glutamate 251 lines the ATP pocket. Positions 327, 340, and 342 each coordinate Mg(2+).

The protein belongs to the D-alanine--D-alanine ligase family. Requires Mg(2+) as cofactor. The cofactor is Mn(2+).

The protein resides in the cytoplasm. The catalysed reaction is 2 D-alanine + ATP = D-alanyl-D-alanine + ADP + phosphate + H(+). It functions in the pathway cell wall biogenesis; peptidoglycan biosynthesis. In terms of biological role, cell wall formation. This is D-alanine--D-alanine ligase from Frankia casuarinae (strain DSM 45818 / CECT 9043 / HFP020203 / CcI3).